The chain runs to 201 residues: Probable nicotinate-nucleotide adenylyltransferase (201 aa).

This sequence belongs to the NadD family.

It catalyses the reaction nicotinate beta-D-ribonucleotide + ATP + H(+) = deamido-NAD(+) + diphosphate. The protein operates within cofactor biosynthesis; NAD(+) biosynthesis; deamido-NAD(+) from nicotinate D-ribonucleotide: step 1/1. In terms of biological role, catalyzes the reversible adenylation of nicotinate mononucleotide (NaMN) to nicotinic acid adenine dinucleotide (NaAD). The sequence is that of Probable nicotinate-nucleotide adenylyltransferase from Clostridium botulinum (strain Kyoto / Type A2).